The chain runs to 96 residues: (4S)-4-hydroxy-5-phosphonooxypentane-2,3-dione isomerase (96 aa).

An ABM domain is found at 2–91 (HVTLVEINVH…MTGPRKKRLF (90 aa)).

This sequence belongs to the LsrG family. In terms of assembly, homodimer.

It is found in the cytoplasm. It catalyses the reaction (2S)-2-hydroxy-3,4-dioxopentyl phosphate = 3-hydroxy-2,4-dioxopentyl phosphate. In terms of biological role, involved in the degradation of phospho-AI-2, thereby terminating induction of the lsr operon and closing the AI-2 signaling cycle. Catalyzes the conversion of (4S)-4-hydroxy-5-phosphonooxypentane-2,3-dione (P-DPD) to 3-hydroxy-5-phosphonooxypentane-2,4-dione (P-HPD). This is (4S)-4-hydroxy-5-phosphonooxypentane-2,3-dione isomerase from Escherichia coli O9:H4 (strain HS).